A 381-amino-acid chain; its full sequence is Guanine nucleotide-binding protein G(olf) subunit alpha (381 aa).

The tract at residues 1 to 25 (MGCLGNSSKTAEDQGVDEKERREAN) is disordered. Residue Gly2 is the site of N-palmitoyl glycine attachment. Cys3 carries the S-palmitoyl cysteine lipid modification. Positions 10-25 (TAEDQGVDEKERREAN) are enriched in basic and acidic residues. Residues 41 to 381 (ATHRLLLLGA…RMHLKQYELL (341 aa)) enclose the G-alpha domain. The interval 44-57 (RLLLLGAGESGKST) is G1 motif. GTP-binding residues include Glu52, Ser53, Gly54, Lys55, Ser56, and Thr57. Ser56 serves as a coordination point for Mg(2+). Residue Thr178 is modified to Phosphothreonine. The interval 183 to 191 (DLLRCRVLT) is G2 motif. GTP contacts are provided by Leu185, Arg186, and Thr191. Mg(2+) is bound by residues Thr191 and Asp210. A G3 motif region spans residues 206–215 (FHMFDVGGQR). Residues Gly213, Asn279, Lys280, Asp282, and Ala353 each contribute to the GTP site. The interval 275 to 282 (ILFLNKQD) is G4 motif. A G5 motif region spans residues 351–356 (TCAVDT).

Belongs to the G-alpha family. G(s) subfamily. G proteins are composed of 3 units; alpha, beta and gamma. The alpha chain contains the guanine nucleotide binding site. Interacts with GAS2L2. Interacts (GDP-bound form) with RIC8B (via C-terminus); promoting GNAL folding and association with the plasma membrane.

The protein localises to the cell membrane. The enzyme catalyses GTP + H2O = GDP + phosphate + H(+). Guanine nucleotide-binding protein (G protein) involved as transducer in olfactory signal transduction controlled by G protein-coupled receptors (GPCRs). Contains the guanine nucleotide binding site and alternates between an active, GTP-bound state and an inactive, GDP-bound state. Signaling by an activated GPCR promotes GDP release and GTP binding. The alpha subunit has a low GTPase activity that converts bound GTP to GDP, thereby terminating the signal. Both GDP release and GTP hydrolysis are modulated by numerous regulatory proteins. GNAL/G(olf) alpha specifically mediates olfactory signal transduction within the olfactory neuroepithelium and the basal ganglia following GPCRs activation. Acts by promoting the specific activation of adenylyl cyclase ADCY3, resulting in increased levels of the signaling molecule cAMP. In Mus musculus (Mouse), this protein is Guanine nucleotide-binding protein G(olf) subunit alpha.